The following is a 273-amino-acid chain: Undecaprenyl-diphosphatase (273 aa).

7 helical membrane-spanning segments follow: residues 6 to 26 (SLLVAAILGVVEGLTEFLPVS), 45 to 65 (AKTFEVVIQLGSILAVVVMFW), 90 to 110 (LTLIHILLGMIPAVVLGLLFH), 116 to 136 (LFNPINVMYALVVGGLLLIAA), 190 to 210 (YAASEFSFLLAVPMMMGATAL), 222 to 242 (GDIPMFAVGFITAFVVALVAI), and 252 to 272 (ISFIPFAIYRFIVAAAVYVVF).

It belongs to the UppP family.

It is found in the cell inner membrane. The catalysed reaction is di-trans,octa-cis-undecaprenyl diphosphate + H2O = di-trans,octa-cis-undecaprenyl phosphate + phosphate + H(+). Functionally, catalyzes the dephosphorylation of undecaprenyl diphosphate (UPP). Confers resistance to bacitracin. This chain is Undecaprenyl-diphosphatase, found in Escherichia fergusonii (strain ATCC 35469 / DSM 13698 / CCUG 18766 / IAM 14443 / JCM 21226 / LMG 7866 / NBRC 102419 / NCTC 12128 / CDC 0568-73).